The following is a 121-amino-acid chain: Perlustrin-like protein (121 aa).

The N-terminal stretch at Met-1–Ala-23 is a signal peptide. The 81-residue stretch at Leu-24–Ser-104 folds into the IGFBP N-terminal domain. 6 disulfides stabilise this stretch: Cys-26/Cys-52, Cys-29/Cys-54, Cys-36/Cys-55, Cys-45/Cys-58, Cys-66/Cys-79, and Cys-73/Cys-101. Residues Asn-68, Asn-81, and Asn-117 are each glycosylated (N-linked (GlcNAc...) asparagine).

Component of the acid-insoluble organic matrix of calcified layers of the shell (at protein level).

It localises to the secreted. This is Perlustrin-like protein from Lottia gigantea (Giant owl limpet).